A 327-amino-acid chain; its full sequence is MFNDMPVFDYEDIQLIPNKCIINSRSEADTSVRLGNYTFKLPVIPANMQTIIDETIAEQLARDGYFYIMHRFDEQGRKPFIQRMHEQQLIASISVGVKDYEYDFVSSLKEDAPEFITIDIAHGHADSVIKMIKHIKAELPETFVIAGNVGTPEAVRELENAGADATKVGIGPGKVCITKVKTGFGTGGWQLAAVRWCAKAARKPIIADGGIRTHGDIAKSIRFGATMVMIGSLFAGHIESPGKMVEIDGQSFKEYYGSASEYQKGEHKNVEGKKILLPTKGHLADTLTEMKQDLQSSISYAGGRELESLRRVNYVIVKNSIWNGDSI.

The active-site Thioimidate intermediate is the Cys176. An NADP(+)-binding site is contributed by 205–228 (IIADGGIRTHGDIAKSIRFGATMV).

The protein belongs to the IMPDH/GMPR family. GuaC type 2 subfamily.

The enzyme catalyses IMP + NH4(+) + NADP(+) = GMP + NADPH + 2 H(+). In terms of biological role, catalyzes the irreversible NADPH-dependent deamination of GMP to IMP. It functions in the conversion of nucleobase, nucleoside and nucleotide derivatives of G to A nucleotides, and in maintaining the intracellular balance of A and G nucleotides. The protein is GMP reductase of Streptococcus equi subsp. zooepidemicus (strain H70).